The chain runs to 181 residues: Endoribonuclease YbeY (181 aa).

Zn(2+) is bound by residues His-115, His-119, and His-125.

It belongs to the endoribonuclease YbeY family. Zn(2+) serves as cofactor.

The protein resides in the cytoplasm. Functionally, single strand-specific metallo-endoribonuclease involved in late-stage 70S ribosome quality control and in maturation of the 3' terminus of the 16S rRNA. The sequence is that of Endoribonuclease YbeY from Bifidobacterium adolescentis (strain ATCC 15703 / DSM 20083 / NCTC 11814 / E194a).